We begin with the raw amino-acid sequence, 715 residues long: Nucleolar complex protein 2 homolog (715 aa).

3 disordered regions span residues 17-71, 85-132, and 638-715; these read SKRI…HKLD, FLQQ…DKTK, and ERSA…SDED. The segment covering 89–128 has biased composition (acidic residues); it reads EDADLLNMEDDGDDDEDDDEDDEDEEEEESDDDEDDEEDD. Basic and acidic residues predominate over residues 638 to 660; sequence ERSAVENSKKDDKKKKKEEEAAA.

Belongs to the NOC2 family.

It is found in the nucleus. Functionally, required for normal somatic gonad development and for regulation of germline development and proliferation. In Caenorhabditis elegans, this protein is Nucleolar complex protein 2 homolog (pro-2).